Here is a 435-residue protein sequence, read N- to C-terminus: Serine--tRNA ligase (435 aa).

A disordered region spans residues 41 to 70 (QVKTEELQAQRNSRSKSIGQAKAKGDHEEA). The span at 49-58 (AQRNSRSKSI) shows a compositional bias: polar residues. Residue 242 to 244 (TAE) coordinates L-serine. 273–275 (RSE) lines the ATP pocket. E296 provides a ligand contact to L-serine. 360–363 (EISS) contacts ATP. Residue S396 participates in L-serine binding.

It belongs to the class-II aminoacyl-tRNA synthetase family. Type-1 seryl-tRNA synthetase subfamily. In terms of assembly, homodimer. The tRNA molecule binds across the dimer.

Its subcellular location is the cytoplasm. It carries out the reaction tRNA(Ser) + L-serine + ATP = L-seryl-tRNA(Ser) + AMP + diphosphate + H(+). It catalyses the reaction tRNA(Sec) + L-serine + ATP = L-seryl-tRNA(Sec) + AMP + diphosphate + H(+). The protein operates within aminoacyl-tRNA biosynthesis; selenocysteinyl-tRNA(Sec) biosynthesis; L-seryl-tRNA(Sec) from L-serine and tRNA(Sec): step 1/1. Catalyzes the attachment of serine to tRNA(Ser). Is also able to aminoacylate tRNA(Sec) with serine, to form the misacylated tRNA L-seryl-tRNA(Sec), which will be further converted into selenocysteinyl-tRNA(Sec). This Aliivibrio fischeri (strain ATCC 700601 / ES114) (Vibrio fischeri) protein is Serine--tRNA ligase.